Reading from the N-terminus, the 343-residue chain is Phosphoribosylformylglycinamidine cyclo-ligase (343 aa).

This sequence belongs to the AIR synthase family.

It is found in the cytoplasm. The enzyme catalyses 2-formamido-N(1)-(5-O-phospho-beta-D-ribosyl)acetamidine + ATP = 5-amino-1-(5-phospho-beta-D-ribosyl)imidazole + ADP + phosphate + H(+). It participates in purine metabolism; IMP biosynthesis via de novo pathway; 5-amino-1-(5-phospho-D-ribosyl)imidazole from N(2)-formyl-N(1)-(5-phospho-D-ribosyl)glycinamide: step 2/2. The sequence is that of Phosphoribosylformylglycinamidine cyclo-ligase from Staphylococcus epidermidis (strain ATCC 35984 / DSM 28319 / BCRC 17069 / CCUG 31568 / BM 3577 / RP62A).